Consider the following 488-residue polypeptide: Mannosylglycerate hydrolase MGH2 (488 aa).

Residues tyrosine 94, 98–101 (WNWD), tyrosine 146, glutamine 167, and glycine 227 contribute to the substrate site. The active-site Proton donor is the aspartate 229. Residues arginine 262 and 415-416 (YW) contribute to the substrate site. Glutamate 459 acts as the Proton acceptor in catalysis.

Belongs to the glycosyl hydrolase 63 family.

It carries out the reaction (2R)-2-O-(alpha-D-mannosyl)-glycerate + H2O = D-mannose + (R)-glycerate. The enzyme catalyses (2R)-2-O-(alpha-D-glucopyranosyl)-glycerate + H2O = (R)-glycerate + D-glucose. Its activity is regulated as follows. Activity is not dependent on divalent cations, but it is enhanced by Mn(2+). Catalyzes the hydrolysis of alpha-D-mannosyl-glycerate (MG) to D-glycerate and D-mannose. Can also hydrolyze alpha-D-glucopyranosyl-glycerate (GG)with lower efficiency. This chain is Mannosylglycerate hydrolase MGH2, found in Selaginella moellendorffii (Spikemoss).